A 382-amino-acid chain; its full sequence is Mannitol-1-phosphate 5-dehydrogenase (382 aa).

Residue 3–14 (ALHFGAGNIGRG) coordinates NAD(+).

This sequence belongs to the mannitol dehydrogenase family.

The catalysed reaction is D-mannitol 1-phosphate + NAD(+) = beta-D-fructose 6-phosphate + NADH + H(+). This Salmonella schwarzengrund (strain CVM19633) protein is Mannitol-1-phosphate 5-dehydrogenase.